A 325-amino-acid polypeptide reads, in one-letter code: Brain mitochondrial carrier protein 1 (325 aa).

A run of 6 helical transmembrane segments spans residues 38-54 (GLNW…SIVA), 112-128 (LRQA…YQSL), 145-165 (MICG…TDVL), 199-215 (GVVP…GVEL), 240-256 (VSSF…SNPV), and 298-315 (GFWP…IFFI). Solcar repeat units follow at residues 42–131 (KPFV…LKRL), 139–224 (ETLL…TKKH), and 233–323 (DTIL…LKRL).

Belongs to the mitochondrial carrier (TC 2.A.29) family. Homotetramer. Mainly expressed in brain, particularly abundant in cortex, hippocampus thalamus, amygdala and hypothalamus. Highly expressed in heart and kidney, but not liver or lung (at protein level). In the nervous system, expressed in cortex, basal ganglia, substantia nigra, cerebellum, and spinal cord (at protein level).

It localises to the mitochondrion inner membrane. The catalysed reaction is sulfite(in) + sulfate(out) = sulfite(out) + sulfate(in). The enzyme catalyses thiosulfate(in) + sulfate(out) = thiosulfate(out) + sulfate(in). It carries out the reaction sulfate(out) + phosphate(in) = sulfate(in) + phosphate(out). It catalyses the reaction oxalate(in) + sulfate(out) = oxalate(out) + sulfate(in). The catalysed reaction is malonate(in) + sulfate(out) = malonate(out) + sulfate(in). The enzyme catalyses maleate(in) + sulfate(out) = maleate(out) + sulfate(in). It carries out the reaction (S)-malate(in) + sulfate(out) = (S)-malate(out) + sulfate(in). It catalyses the reaction (3S)-citramalate(in) + sulfate(out) = (3S)-citramalate(out) + sulfate(in). The catalysed reaction is (3R)-citramalate(in) + sulfate(out) = (3R)-citramalate(out) + sulfate(in). The enzyme catalyses sulfate(out) + succinate(in) = sulfate(in) + succinate(out). It carries out the reaction (S,S)-tartrate(in) + sulfate(out) = (S,S)-tartrate(out) + sulfate(in). It catalyses the reaction (2R,3R)-tartrate(in) + sulfate(out) = (2R,3R)-tartrate(out) + sulfate(in). The catalysed reaction is D-aspartate(in) + sulfate(out) = D-aspartate(out) + sulfate(in). The enzyme catalyses L-aspartate(in) + sulfate(out) = L-aspartate(out) + sulfate(in). It carries out the reaction sulfate(in) = sulfate(out). It catalyses the reaction phosphate(in) = phosphate(out). The catalysed reaction is (S)-malate(out) = (S)-malate(in). The enzyme catalyses citrate(in) = citrate(out). It carries out the reaction L-aspartate(out) = L-aspartate(in). It catalyses the reaction L-glutamate(out) = L-glutamate(in). The catalysed reaction is H(+)(in) = H(+)(out). The enzyme catalyses chloride(in) = chloride(out). In terms of biological role, transports inorganic anions (sulfate, sulfite, thiosulfate and phosphate) and, to a lesser extent, a variety of dicarboxylates (e.g. malonate, malate and citramalate) and, even more so, aspartate and glutamate and tricarboxylates. May catalyze the export of sulfite and thiosulfate (the hydrogen sulfide degradation products) from the mitochondria, thereby modulating the level of the hydrogen sulfide. Also can mediate a very low unidirectional transport of anions including sulfate, phosphate, (S)-malate, citrate, L-aspartate and L-glutamate. Maintains oxidative balance (through uncoupling activities) and ATP production (by modifying mitochondrial membrane potential). Is able to transport protons across lipid membranes. Also exhibits transmembrane chloride transport activity to a lesser extent. May modify mitochondrial respiratory efficiency and mitochondrial oxidant production. This Mus musculus (Mouse) protein is Brain mitochondrial carrier protein 1.